A 4421-amino-acid chain; its full sequence is Replicase polyprotein 1a (4421 aa).

The CoV Nsp1 globular domain occupies 54 to 174; that stretch reads YDNHVKIDCR…HKWFQFCRLY (121 aa). The region spanning 192 to 222 is the BetaCoV Nsp1 C-terminal domain; sequence FSVEAAYAEVHAEPKGKYSQKAYALLRQYRG. The 263-residue stretch at 226-488 folds into the CoV Nsp2 N-terminal domain; it reads VLFVDQYGCD…LITHALYLDY (263 aa). 4 residues coordinate Zn(2+): C365, C370, C386, and C389. The tract at residues 365–389 is C4; it reads CFNDNCDFYGWVSGNMMDGFSCPLC. A CoV Nsp2 middle domain is found at 493-681; it reads CGNLEQNHIL…VNKFYTFFKL (189 aa). A CoV Nsp2 C-terminal domain is found at 697–809; the sequence is LKTINGLVCI…LDHAWRFPCA (113 aa). The Ubiquitin-like 1 domain occupies 811–923; the sequence is RKVNFNEKPV…MYCTFAIEDV (113 aa). A run of 9 repeats spans residues 945–954, 955–964, 965–974, 975–984, 985–994, 995–1004, 1005–1014, 1015–1024, and 1025–1034. The tract at residues 945 to 1034 is 9 X 10 AA tandem repeat of N-[DN]-D-E-D-V-V-T-G-D; sequence NDDEDVVTGD…NNDEDVVTGD (90 aa). A disordered region spans residues 947–1042; that stretch reads DEDVVTGDND…GDNNDEESVT (96 aa). In terms of domain architecture, Peptidase C16 1 spans 1073–1323; sequence VFNDVYNDAL…VCFVKGDIIN (251 aa). The active-site For PL1-PRO activity is the C1111. Zn(2+) contacts are provided by C1188, C1191, C1214, and C1216. The C4-type 1 zinc finger occupies 1188 to 1216; sequence CLKCGFSFDLNGLDAVFFYGDIVSHVCKC. Catalysis depends on for PL1-PRO activity residues H1262 and D1273. Residues 1301–1472 form the Macro domain; it reads ELAQLYGLCI…IIQKCQITSV (172 aa). Residues 1528-1599 enclose the DPUP domain; the sequence is NDVRDYLLSK…TVNQVCVLLA (72 aa). The Ubiquitin-like 2 domain maps to 1599 to 1654; that stretch reads AKKIDVLLTVDGVNFKSISLTVGEVFGKILGNVFCDGIDVTKLKCSDFYADKILYQ. Residues 1668–1928 enclose the Peptidase C16 2 domain; that stretch reads SSFGFDQQQL…MVAYNPDLSQ (261 aa). Catalysis depends on C1707, which acts as the For PL2-PRO activity. Zn(2+) is bound by residues C1785, C1787, C1819, and C1821. The segment at 1785–1821 adopts a C4-type 2 zinc-finger fold; sequence CDCGIKQESRVGVDAVMHFGTLAKTDLFNGYKIGCNC. Active-site for PL2-PRO activity residues include H1864 and D1878. A Nucleic acid-binding domain is found at 1942–2043; that stretch reads IKAQFKPFAK…TYFNKPSFKS (102 aa). The G2M domain occupies 2058-2207; that stretch reads ESQGNVVTSV…NDKTIFYTTE (150 aa). Transmembrane regions (helical) follow at residues 2176 to 2196, 2237 to 2257, and 2268 to 2288; these read AIEFYGFLKWLFIYVFSLLHF, FLVVATVFLFWFNFLYINVIF, and FPIFVGRIVMWIKATFGLVTI. The HD1 stretch occupies residues 2176 to 2413; it reads AIEFYGFLKW…FVLLRFYIVV (238 aa). A 3Ecto domain is found at 2273 to 2334; sequence GRIVMWIKAT…AIDFVQYEVD (62 aa). 2 cysteine pairs are disulfide-bonded: C2289–C2313 and C2304–C2310. 2 helical membrane-spanning segments follow: residues 2351-2371 and 2393-2413; these read LVIGYSLYTVWFYPLFCLIGL and FIVFVANMLPAFVLLRFYIVV. Residues 2421–2511 are Y1; it reads GFIRHIVYGC…ELKRPVNPTD (91 aa). The CoV Nsp3 Y domain maps to 2421 to 2788; sequence GFIRHIVYGC…LTTPFSLKGG (368 aa). Residues H2425, C2430, C2435, C2438, C2471, H2474, C2478, and C2481 each contribute to the Zn(2+) site. Residues 2425–2438 are ZF1; it reads HIVYGCNKAGCLFC. The tract at residues 2471–2481 is ZF2; the sequence is CVKHQWNCFNC. The segment at 2512-2604 is Y2; it reads ASHYVVTDIK…LVDKKLITTA (93 aa). The segment at 2512–2788 is coV-Y; sequence ASHYVVTDIK…LTTPFSLKGG (277 aa). Positions 2605-2687 are Y3; that stretch reads CNGISVTQIM…KSMISAVAAG (83 aa). The interval 2688–2788 is Y4; the sequence is LEFTDENYNN…LTTPFSLKGG (101 aa). Helical transmembrane passes span 2794–2814, 3069–3089, 3101–3121, 3128–3148, and 3153–3173; these read LLYILFFISLICFILLWALLP, ASSIFGAILAIVVVLVFYYLI, VVVINVIVWCINFLMLFVFQV, VYACFYFYVTLYFPSEISVIM, and IVMYGAIMPFWFCVTYVAMVI. The interval 2794 to 3173 is HD2; it reads LLYILFFISL…FCVTYVAMVI (380 aa). One can recognise a Nsp4C domain in the interval 3187–3284; sequence IGVNVCSDST…TASVSTSFLQ (98 aa). The region spanning 3285-3587 is the Peptidase C30 domain; sequence SGIVKMVSPT…YQQLAGVKLQ (303 aa). Residues H3325 and C3429 each act as for 3CL-PRO activity in the active site. 7 helical membrane-spanning segments follow: residues 3601–3621, 3626–3646, 3651–3671, 3694–3714, 3722–3742, 3750–3770, and 3793–3813; these read ILISTFLFSCIISAFVKWTIF, THMIGVTLCVLCFVSFMMLLV, FYLTMYIIPVLCTLFYVNYLV, FTYVYEVFYGCILCVFAIFIT, IFSLMFLVGRIVTLISMWYFG, LLFITAFLGTYTWTTILSLAI, and LILLSYLFIGYILSCYWGFFS. An HD3 region spans residues 3601–3813; sequence ILISTFLFSC…ILSCYWGFFS (213 aa). The RdRp Nsp7 cofactor domain occupies 3875–3963; that stretch reads SKLTDVKCAN…DYVQDSTVLQ (89 aa). The region spanning 3964–4160 is the RdRp Nsp8 cofactor domain; the sequence is ALQSEFVNMA…YNEVANAVMQ (197 aa). The Nsp9 ssRNA-binding domain maps to 4161–4270; the sequence is NNELMPHKLK…GTLSSTIRLQ (110 aa). Residues 4271 to 4408 enclose the ExoN/MTase coactivator domain; that stretch reads AGVATEYAAN…CVGSSVAVQS (138 aa). Positions 4344, 4347, 4353, 4360, 4386, 4389, 4397, and 4399 each coordinate Zn(2+). 2 zinc fingers span residues 4344–4360 and 4386–4399; these read CIYCRARVEHPDVDGIC and CQVCGFWRDGSCSC.

This sequence belongs to the coronaviruses polyprotein 1ab family. In terms of assembly, 3CL-PRO exists as monomer and homodimer. Eight copies of nsp7 and eight copies of nsp8 assemble to form a heterohexadecamer. Nsp9 is a dimer. Nsp10 forms a dodecamer. In terms of processing, specific enzymatic cleavages in vivo by its own proteases yield mature proteins. 3CL-PRO and PL-PRO proteinases are autocatalytically processed.

It localises to the host membrane. Its subcellular location is the host cytoplasm. It is found in the host perinuclear region. The catalysed reaction is Thiol-dependent hydrolysis of ester, thioester, amide, peptide and isopeptide bonds formed by the C-terminal Gly of ubiquitin (a 76-residue protein attached to proteins as an intracellular targeting signal).. The enzyme catalyses TSAVLQ-|-SGFRK-NH2 and SGVTFQ-|-GKFKK the two peptides corresponding to the two self-cleavage sites of the SARS 3C-like proteinase are the two most reactive peptide substrates. The enzyme exhibits a strong preference for substrates containing Gln at P1 position and Leu at P2 position.. It catalyses the reaction a 5'-end diphospho-ribonucleoside in mRNA + GTP + H(+) = a 5'-end (5'-triphosphoguanosine)-ribonucleoside in mRNA + diphosphate. In terms of biological role, the papain-like proteinase 1 (PL1-PRO) and papain-like proteinase 2 (PL2-PRO) are responsible for the cleavages located at the N-terminus of the replicase polyprotein. In addition, PLP2 possesses a deubiquitinating/deISGylating activity and processes both 'Lys-48'- and 'Lys-63'-linked polyubiquitin chains from cellular substrates. Antagonizes innate immune induction of type I interferon by blocking the phosphorylation, dimerization and subsequent nuclear translocation of host IRF-3. Its function is as follows. Responsible for the majority of cleavages as it cleaves the C-terminus of replicase polyprotein at 11 sites. Recognizes substrates containing the core sequence [ILMVF]-Q-|-[SGACN]. Inhibited by the substrate-analog Cbz-Val-Asn-Ser-Thr-Leu-Gln-CMK. Also contains an ADP-ribose-1''-phosphate (ADRP)-binding function. Functionally, nsp7-nsp8 hexadecamer may possibly confer processivity to the polymerase, maybe by binding to dsRNA or by producing primers utilized by the latter. Catalytic subunit of viral RNA capping enzyme which catalyzes the RNA guanylyltransferase reaction for genomic and sub-genomic RNAs. The kinase-like NiRAN domain of NSP12 transfers RNA to the amino terminus of NSP9, forming a covalent RNA-protein intermediate. Subsequently, the NiRAN domain transfers RNA to GDP, forming the core cap structure GpppA-RNA. The NSP14 and NSP16 methyltransferases then add methyl groups to form functional cap structures. In terms of biological role, binds to the 40S ribosomal subunit and inhibits host translation. The nsp1-40S ribosome complex further induces an endonucleolytic cleavage near the 5'UTR of host mRNAs, targeting them for degradation. By suppressing host gene expression, nsp1 facilitates efficient viral gene expression in infected cells and evasion from host immune response. This is Replicase polyprotein 1a from Human coronavirus HKU1 (isolate N5) (HCoV-HKU1).